A 98-amino-acid polypeptide reads, in one-letter code: UPF0235 protein MJ0618 (98 aa).

Belongs to the UPF0235 family.

The polypeptide is UPF0235 protein MJ0618 (Methanocaldococcus jannaschii (strain ATCC 43067 / DSM 2661 / JAL-1 / JCM 10045 / NBRC 100440) (Methanococcus jannaschii)).